Here is a 209-residue protein sequence, read N- to C-terminus: Kynurenine formamidase (209 aa).

Residue phenylalanine 18 coordinates substrate. Residues histidine 48, histidine 52, and aspartate 54 each contribute to the Zn(2+) site. Histidine 58 functions as the Proton donor/acceptor in the catalytic mechanism. Zn(2+) is bound by residues histidine 160 and glutamate 172.

This sequence belongs to the Cyclase 1 superfamily. KynB family. In terms of assembly, homodimer. Requires Zn(2+) as cofactor.

It catalyses the reaction N-formyl-L-kynurenine + H2O = L-kynurenine + formate + H(+). Its pathway is amino-acid degradation; L-tryptophan degradation via kynurenine pathway; L-kynurenine from L-tryptophan: step 2/2. In terms of biological role, catalyzes the hydrolysis of N-formyl-L-kynurenine to L-kynurenine, the second step in the kynurenine pathway of tryptophan degradation. This Bordetella avium (strain 197N) protein is Kynurenine formamidase.